A 290-amino-acid chain; its full sequence is 4-hydroxy-tetrahydrodipicolinate synthase (290 aa).

A pyruvate-binding site is contributed by T44. The active-site Proton donor/acceptor is Y132. K160 (schiff-base intermediate with substrate) is an active-site residue. I202 provides a ligand contact to pyruvate.

This sequence belongs to the DapA family. Homotetramer; dimer of dimers.

The protein resides in the cytoplasm. It catalyses the reaction L-aspartate 4-semialdehyde + pyruvate = (2S,4S)-4-hydroxy-2,3,4,5-tetrahydrodipicolinate + H2O + H(+). It functions in the pathway amino-acid biosynthesis; L-lysine biosynthesis via DAP pathway; (S)-tetrahydrodipicolinate from L-aspartate: step 3/4. In terms of biological role, catalyzes the condensation of (S)-aspartate-beta-semialdehyde [(S)-ASA] and pyruvate to 4-hydroxy-tetrahydrodipicolinate (HTPA). This Citrifermentans bemidjiense (strain ATCC BAA-1014 / DSM 16622 / JCM 12645 / Bem) (Geobacter bemidjiensis) protein is 4-hydroxy-tetrahydrodipicolinate synthase.